A 274-amino-acid chain; its full sequence is uncharacterized protein (274 aa).

Positions 99 to 206 (NNVISGYVDL…ESEMEIFIQK (108 aa)) form a coiled coil.

This is an uncharacterized protein from Dictyostelium discoideum (Social amoeba).